The primary structure comprises 191 residues: ECF RNA polymerase sigma-E factor (191 aa).

Positions 1–153 are binds RNAP core; the sequence is MSEQLTDQVL…MAITLRELDG (153 aa). Positions 25-92 are sigma-70 factor domain-2; it reads LVVRYQHKVA…KNYLVAQGRR (68 aa). A Polymerase core binding motif is present at residues 48-61; sequence DVVQEAFIKAYRAL. The interval 129–180 is sigma-70 factor domain-4; the sequence is QIVFRTIESLPEDLRMAITLRELDGLSYEEIAAIMDCPVGTVRSRIFRAREA. Positions 156–175 form a DNA-binding region, H-T-H motif; that stretch reads YEEIAAIMDCPVGTVRSRIF.

It belongs to the sigma-70 factor family. ECF subfamily. Interacts transiently with the RNAP catalytic core formed by RpoA, RpoB, RpoC and RpoZ (2 alpha, 1 beta, 1 beta' and 1 omega subunit) to form the RNAP holoenzyme that can initiate transcription. Interacts 1:1 with anti-sigma-E factor RseA which prevents binding to RNAP catalytic core.

The protein resides in the cytoplasm. Its activity is regulated as follows. ECF sigma-E is held in an inactive form by its cognate anti-sigma factor (RseA) until released by regulated intramembrane proteolysis (RIP). RIP occurs when an extracytoplasmic signal (periplasmic stress and excess LPS) triggers a concerted proteolytic cascade to transmit information and elicit cellular responses. The anti-sigma factor RseA is an inner membrane protein, binding sigma-E in the cytoplasm and RseB in the periplasm. RseA is first cut extracytoplasmically (site-1 protease, S1P, by DegS), then within the membrane itself (site-2 protease, S2P, by RseP), while cytoplasmic proteases (predominantly ClpX-ClpP) finish degrading the regulatory protein, liberating sigma-E. Degradation of RseA requires 2 signals to activate DegS; an outer membrane protein (OMP) signal activates DegS, while an LPS signal causes release of RseB from RseA, freeing RseA to be cleaved. In terms of biological role, sigma factors are initiation factors that promote the attachment of RNA polymerase (RNAP) to specific initiation sites and are then released. Extracytoplasmic function (ECF) sigma-E controls the envelope stress response, responding to periplasmic protein stress, increased levels of periplasmic lipopolysaccharide (LPS) as well as heat shock and oxidative stress; it controls protein processing in the extracytoplasmic compartment. The protein is ECF RNA polymerase sigma-E factor (rpoE) of Escherichia coli O157:H7.